The primary structure comprises 376 residues: Penicillin V acylase (376 aa).

The signal sequence occupies residues 1–29; that stretch reads MIKNNKRIKSTVCALSLVALTLGSAVSLA. Cys-30 acts as the Nucleophile in catalysis.

Belongs to the peptidase C59 family. Homotetramer. Dimer of dimers.

The protein localises to the periplasm. The catalysed reaction is a penicillin + H2O = 6-aminopenicillanate + a carboxylate. Its activity is regulated as follows. Exhibits uncharacteristic kinetic behavior, showing positive cooperativity coupled with substrate inhibition. Penicillin acylase activity is enhanced in the presence of the reducing agent DTT, indicating active sulfhydryl group in the enzyme. Also shows enhanced activity in presence of organic solvents and detergents. Inhibited largely in presence of Ag(+), Hg(2+) and Cd(2+) ions, which have strong affinities for sulfhydryl groups. Activity is also inhibited by bile salts. Catalyzes the hydrolysis of penicillin V to 6-aminopenicillanate (6-APA). Shows high specificity towards penicillin V. Can use other beta-lactam substrates, including penicillin G, ampicillin, cephalexin, cloxacillin and dicloxacillin, but at a rate less than 10% of that of penicillin V. Does not show any activity with glyco- or tauro-conjugated bile salts. The protein is Penicillin V acylase of Pectobacterium atrosepticum (strain SCRI 1043 / ATCC BAA-672) (Erwinia carotovora subsp. atroseptica).